Reading from the N-terminus, the 267-residue chain is Regulatory protein VirG (267 aa).

The region spanning 29–143 is the Response regulatory domain; sequence HVLLVDDDVA…EFLARIRVAL (115 aa). Asp78 is subject to 4-aspartylphosphate. The ompR/PhoB-type DNA-binding region spans 155–255; it reads RRSFCFTDWT…ARGAGYFFDA (101 aa).

Post-translationally, phosphorylated by wide host range (WHR) VirA protein.

Its subcellular location is the cytoplasm. In terms of biological role, virG is required for the positive regulation of at least two vir loci encoded by the Ti plasmid of A.tumefaciens. This Rhizobium radiobacter (Agrobacterium tumefaciens) protein is Regulatory protein VirG (virG).